We begin with the raw amino-acid sequence, 170 residues long: Tubulin polymerization-promoting protein family member 2 (170 aa).

Positions 127–147 (TGTHKERFDESGKGKGIAGRE) are disordered. Positions 129-139 (THKERFDESGK) are enriched in basic and acidic residues.

The protein belongs to the TPPP family.

It is found in the cytoplasm. The protein localises to the cytosol. The protein resides in the cell projection. It localises to the cilium. Its subcellular location is the flagellum. Functionally, probable regulator of microtubule dynamics required for sperm motility. In contrast to other members of the family, has no microtubule bundling activity. This chain is Tubulin polymerization-promoting protein family member 2 (TPPP2), found in Macaca fascicularis (Crab-eating macaque).